Reading from the N-terminus, the 418-residue chain is Serine protease inhibitor A3M (418 aa).

An N-terminal signal peptide occupies residues 1–20 (MAFIAALGILMAGICPTVLC). 3 N-linked (GlcNAc...) asparagine glycosylation sites follow: N104, N184, and N269. The segment at 367–392 (GTEAAAATGFIFGFRSRRLQTMTVQF) is RCL.

Belongs to the serpin family. In terms of tissue distribution, expressed in liver and testis.

The protein resides in the secreted. In Mus musculus (Mouse), this protein is Serine protease inhibitor A3M (Serpina3m).